We begin with the raw amino-acid sequence, 467 residues long: UDP-glycosyltransferase 71D1 (467 aa).

H16 functions as the Proton acceptor in the catalytic mechanism. An an anthocyanidin-binding site is contributed by H16. The Charge relay role is filled by D122. Residues T144, Q341, H356, W359, N360, S361, and E364 each coordinate UDP-alpha-D-glucose. An anthocyanidin is bound at residue A379. E380 and Q381 together coordinate UDP-alpha-D-glucose.

The protein belongs to the UDP-glycosyltransferase family.

The catalysed reaction is a flavonol + UDP-alpha-D-glucose = a flavonol 3-O-beta-D-glucoside + UDP + H(+). Its function is as follows. Possesses quercetin 3-O-glucosyltransferase activity in vitro. The sequence is that of UDP-glycosyltransferase 71D1 (UGT71D1) from Arabidopsis thaliana (Mouse-ear cress).